Reading from the N-terminus, the 149-residue chain is Interleukin-2 (149 aa).

Residues 1 to 20 (MYRMQLLSCIALTLAVLANS) form the signal peptide. O-linked (GalNAc...) threonine glycosylation is present at T23. A disulfide bond links C78 and C121. N-linked (GlcNAc...) asparagine glycosylation is present at N106.

Belongs to the IL-2 family.

Its subcellular location is the secreted. Its function is as follows. Cytokine produced by activated CD4-positive helper T-cells and to a lesser extend activated CD8-positive T-cells and natural killer (NK) cells that plays pivotal roles in the immune response and tolerance. Binds to a receptor complex composed of either the high-affinity trimeric IL-2R (IL2RA/CD25, IL2RB/CD122 and IL2RG/CD132) or the low-affinity dimeric IL-2R (IL2RB and IL2RG). Interaction with the receptor leads to oligomerization and conformation changes in the IL-2R subunits resulting in downstream signaling starting with phosphorylation of JAK1 and JAK3. In turn, JAK1 and JAK3 phosphorylate the receptor to form a docking site leading to the phosphorylation of several substrates including STAT5. This process leads to activation of several pathways including STAT, phosphoinositide-3-kinase/PI3K and mitogen-activated protein kinase/MAPK pathways. Functions as a T-cell growth factor and can increase NK-cell cytolytic activity as well. Promotes strong proliferation of activated B-cells and subsequently immunoglobulin production. Plays a pivotal role in regulating the adaptive immune system by controlling the survival and proliferation of regulatory T-cells, which are required for the maintenance of immune tolerance. Moreover, participates in the differentiation and homeostasis of effector T-cell subsets, including Th1, Th2, Th17 as well as memory CD8-positive T-cells. The chain is Interleukin-2 (IL2) from Equus caballus (Horse).